We begin with the raw amino-acid sequence, 154 residues long: Protein disulfide-isomerase LQY1, chloroplastic (154 aa).

The N-terminal 43 residues, 1 to 43, are a transit peptide targeting the chloroplast; the sequence is MPVSAPSPPRLHSPFIHCPINFTPSSFSARNLRSPSTSYPRIK. Residues 51–71 form a helical membrane-spanning segment; it reads VVAISVGVASVALGIGIPVFY. Residues 77–147 form a CR-type zinc finger; sequence NAAKRENTQP…SGVQPRYLDR (71 aa). 8 residues coordinate Zn(2+): C87, C90, C98, C101, C121, C124, C132, and C135.

This sequence belongs to the BSD2 chaperone family. Interacts with the photosystem II core subunits. Interacts with HHL1. Zn(2+) is required as a cofactor.

The protein localises to the plastid. It is found in the chloroplast thylakoid membrane. It catalyses the reaction Catalyzes the rearrangement of -S-S- bonds in proteins.. Protein disulfide-isomerase probably involved upon formation of a complex with HHL1 in maintaining photosystem II (PSII) activity under high light by regulating repair and reassembly of PSII complexes. The sequence is that of Protein disulfide-isomerase LQY1, chloroplastic from Arabidopsis thaliana (Mouse-ear cress).